Consider the following 205-residue polypeptide: SREBP regulating gene protein (205 aa).

Over 1–16 (MVPCGAVLWRRLLRKR) the chain is Cytoplasmic. A helical membrane pass occupies residues 17–35 (WVLGVVFGLSLVYFLSSTF). Residues 36 to 205 (KQEERTVRDR…GEYPPELLPV (170 aa)) are Lumenal-facing. N-linked (GlcNAc...) asparagine glycosylation occurs at N67.

It belongs to the SPRING family.

It is found in the golgi apparatus membrane. Positively regulates hepatic SREBP signaling pathway by modulating the proper localization of SCAP (SREBP cleavage-activating protein) to the endoplasmic reticulum, thereby controlling the level of functional SCAP. In Gallus gallus (Chicken), this protein is SREBP regulating gene protein.